Consider the following 150-residue polypeptide: Large ribosomal subunit protein bL9 (150 aa).

This sequence belongs to the bacterial ribosomal protein bL9 family.

Its function is as follows. Binds to the 23S rRNA. The sequence is that of Large ribosomal subunit protein bL9 from Streptococcus pneumoniae (strain CGSP14).